A 540-amino-acid polypeptide reads, in one-letter code: Chaperonin GroEL 2 (540 aa).

ATP is bound by residues 30-33, lysine 51, 87-91, glycine 415, 480-482, and aspartate 496; these read TLGP, DGTTT, and NAL.

It belongs to the chaperonin (HSP60) family. Forms a cylinder of 14 subunits composed of two heptameric rings stacked back-to-back. Interacts with the co-chaperonin GroES.

It is found in the cytoplasm. The enzyme catalyses ATP + H2O + a folded polypeptide = ADP + phosphate + an unfolded polypeptide.. Together with its co-chaperonin GroES, plays an essential role in assisting protein folding. The GroEL-GroES system forms a nano-cage that allows encapsulation of the non-native substrate proteins and provides a physical environment optimized to promote and accelerate protein folding. This Protochlamydia amoebophila (strain UWE25) protein is Chaperonin GroEL 2.